We begin with the raw amino-acid sequence, 319 residues long: Ribose-phosphate pyrophosphokinase (319 aa).

ATP-binding positions include 40 to 42 (DGE) and 99 to 100 (RQ). Mg(2+) is bound by residues His-134 and Asp-174. The active site involves Lys-198. D-ribose 5-phosphate is bound by residues Arg-200, Asp-224, and 228–232 (DTAGT).

Belongs to the ribose-phosphate pyrophosphokinase family. Class I subfamily. As to quaternary structure, homohexamer. Mg(2+) serves as cofactor.

Its subcellular location is the cytoplasm. It catalyses the reaction D-ribose 5-phosphate + ATP = 5-phospho-alpha-D-ribose 1-diphosphate + AMP + H(+). The protein operates within metabolic intermediate biosynthesis; 5-phospho-alpha-D-ribose 1-diphosphate biosynthesis; 5-phospho-alpha-D-ribose 1-diphosphate from D-ribose 5-phosphate (route I): step 1/1. Involved in the biosynthesis of the central metabolite phospho-alpha-D-ribosyl-1-pyrophosphate (PRPP) via the transfer of pyrophosphoryl group from ATP to 1-hydroxyl of ribose-5-phosphate (Rib-5-P). This chain is Ribose-phosphate pyrophosphokinase, found in Xanthomonas axonopodis pv. citri (strain 306).